The following is a 121-amino-acid chain: C-X-C motif chemokine 11-6 (121 aa).

The signal sequence occupies residues methionine 1 to glycine 20. Cystine bridges form between cysteine 29–cysteine 56 and cysteine 31–cysteine 73. Residues glutamine 95 to lysine 121 form a disordered region. Over residues serine 100–serine 115 the composition is skewed to low complexity.

It belongs to the intercrine alpha (chemokine CxC) family.

Its subcellular location is the secreted. Its function is as follows. Ligand for cxcr3.2. Chemotactic for macrophages. The sequence is that of C-X-C motif chemokine 11-6 from Danio rerio (Zebrafish).